Reading from the N-terminus, the 328-residue chain is DNA-directed RNA polymerase subunit alpha (328 aa).

The tract at residues 1–232 is alpha N-terminal domain (alpha-NTD); the sequence is MSTQGFLKPR…DQISVFAALE (232 aa). Positions 248-328 are alpha C-terminal domain (alpha-CTD); sequence IDPVLLRPVD…NWPPLGLERP (81 aa).

Belongs to the RNA polymerase alpha chain family. In terms of assembly, homodimer. The RNAP catalytic core consists of 2 alpha, 1 beta, 1 beta' and 1 omega subunit. When a sigma factor is associated with the core the holoenzyme is formed, which can initiate transcription.

It catalyses the reaction RNA(n) + a ribonucleoside 5'-triphosphate = RNA(n+1) + diphosphate. Functionally, DNA-dependent RNA polymerase catalyzes the transcription of DNA into RNA using the four ribonucleoside triphosphates as substrates. The polypeptide is DNA-directed RNA polymerase subunit alpha (Bordetella petrii (strain ATCC BAA-461 / DSM 12804 / CCUG 43448)).